The primary structure comprises 630 residues: Adenine DNA glycosylase (630 aa).

Basic and acidic residues predominate over residues 54–72 (MRKCREKKEAEREAEREAE). Positions 54–123 (MRKCREKKEA…ALGGDIEDLF (70 aa)) are disordered. The segment covering 73-123 (REAEEEEKAEEAEAEADKEEAEEESEEEEEEEEEEAEAEEEALGGDIEDLF) has biased composition (acidic residues). The active-site Proton donor/acceptor is Glu-168. Residues Cys-341, Cys-348, Cys-351, and Cys-357 each coordinate [4Fe-4S] cluster. A Nudix hydrolase domain is found at 383-536 (PRHDFCCVCV…RKVPPFRLQH (154 aa)). The short motif at 427-451 (VILNEEADSATRRNAINVYLKEAFR) is the Nudix box element.

The protein belongs to the Nth/MutY family. It depends on [4Fe-4S] cluster as a cofactor.

It is found in the nucleus. It catalyses the reaction Hydrolyzes free adenine bases from 7,8-dihydro-8-oxoguanine:adenine mismatched double-stranded DNA, leaving an apurinic site.. Its function is as follows. Involved in oxidative DNA damage repair. Initiates repair of A*oxoG to C*G by removing the inappropriately paired adenine base from the DNA backbone. Possesses both adenine and 2-OH-A DNA glycosylase activities. This is Adenine DNA glycosylase (MYH) from Arabidopsis thaliana (Mouse-ear cress).